Here is a 287-residue protein sequence, read N- to C-terminus: 4-hydroxybenzoate octaprenyltransferase (287 aa).

A run of 9 helical transmembrane segments spans residues 22-42 (IGTLLLLWPTLWALWIAAQGF), 45-65 (LGVLIVFSAGVFLMRSAGCVI), 91-111 (TSTEAIILFFILAIVSFLLVL), 114-134 (NSLTIQLSFAGLLLAFAYPFM), 139-159 (QLPQLVLGLAFSWSIPMAFAA), 161-181 (ANALPAVVWIIFAVNIIWTIA), 212-232 (IIIALLQLTSLILLSLLGWLE), 236-256 (WIYFIALLVVGGLFLRQQLQI), and 267-287 (AFLDNNYVGFVIFAGLFLGYL).

This sequence belongs to the UbiA prenyltransferase family. Requires Mg(2+) as cofactor.

The protein resides in the cell inner membrane. The catalysed reaction is all-trans-octaprenyl diphosphate + 4-hydroxybenzoate = 4-hydroxy-3-(all-trans-octaprenyl)benzoate + diphosphate. Its pathway is cofactor biosynthesis; ubiquinone biosynthesis. Catalyzes the prenylation of para-hydroxybenzoate (PHB) with an all-trans polyprenyl group. Mediates the second step in the final reaction sequence of ubiquinone-8 (UQ-8) biosynthesis, which is the condensation of the polyisoprenoid side chain with PHB, generating the first membrane-bound Q intermediate 3-octaprenyl-4-hydroxybenzoate. The sequence is that of 4-hydroxybenzoate octaprenyltransferase from Psychromonas ingrahamii (strain DSM 17664 / CCUG 51855 / 37).